We begin with the raw amino-acid sequence, 101 residues long: CRISPR-associated endoribonuclease Cas2 (101 aa).

Asp8 serves as a coordination point for Mg(2+).

It belongs to the CRISPR-associated endoribonuclease Cas2 protein family. Homodimer, forms a heterotetramer with a Cas1 homodimer. The cofactor is Mg(2+).

CRISPR (clustered regularly interspaced short palindromic repeat), is an adaptive immune system that provides protection against mobile genetic elements (viruses, transposable elements and conjugative plasmids). CRISPR clusters contain sequences complementary to antecedent mobile elements and target invading nucleic acids. CRISPR clusters are transcribed and processed into CRISPR RNA (crRNA). Functions as a ssRNA-specific endoribonuclease. Involved in the integration of spacer DNA into the CRISPR cassette. The sequence is that of CRISPR-associated endoribonuclease Cas2 from Lacticaseibacillus rhamnosus (strain ATCC 53103 / LMG 18243 / GG) (Lactobacillus rhamnosus).